Consider the following 620-residue polypeptide: 1-deoxy-D-xylulose-5-phosphate synthase (620 aa).

Residues His-80 and 121-123 each bind thiamine diphosphate; that span reads GHS. Asp-152 contributes to the Mg(2+) binding site. Thiamine diphosphate contacts are provided by residues 153–154, Asn-181, Tyr-288, and Glu-370; that span reads GA. A Mg(2+)-binding site is contributed by Asn-181.

Belongs to the transketolase family. DXPS subfamily. As to quaternary structure, homodimer. Mg(2+) is required as a cofactor. The cofactor is thiamine diphosphate.

It catalyses the reaction D-glyceraldehyde 3-phosphate + pyruvate + H(+) = 1-deoxy-D-xylulose 5-phosphate + CO2. The protein operates within metabolic intermediate biosynthesis; 1-deoxy-D-xylulose 5-phosphate biosynthesis; 1-deoxy-D-xylulose 5-phosphate from D-glyceraldehyde 3-phosphate and pyruvate: step 1/1. Its function is as follows. Catalyzes the acyloin condensation reaction between C atoms 2 and 3 of pyruvate and glyceraldehyde 3-phosphate to yield 1-deoxy-D-xylulose-5-phosphate (DXP). The sequence is that of 1-deoxy-D-xylulose-5-phosphate synthase from Salmonella typhi.